We begin with the raw amino-acid sequence, 472 residues long: ATP-dependent protease ATPase subunit HslU (472 aa).

ATP contacts are provided by residues Ile20, 62–67 (GVGKTE), Asp285, Glu350, and Arg422.

The protein belongs to the ClpX chaperone family. HslU subfamily. As to quaternary structure, a double ring-shaped homohexamer of HslV is capped on each side by a ring-shaped HslU homohexamer. The assembly of the HslU/HslV complex is dependent on binding of ATP.

It localises to the cytoplasm. Functionally, ATPase subunit of a proteasome-like degradation complex; this subunit has chaperone activity. The binding of ATP and its subsequent hydrolysis by HslU are essential for unfolding of protein substrates subsequently hydrolyzed by HslV. HslU recognizes the N-terminal part of its protein substrates and unfolds these before they are guided to HslV for hydrolysis. The sequence is that of ATP-dependent protease ATPase subunit HslU from Lactiplantibacillus plantarum (strain ATCC BAA-793 / NCIMB 8826 / WCFS1) (Lactobacillus plantarum).